Here is a 763-residue protein sequence, read N- to C-terminus: Phosphoglycerol transferase I (763 aa).

Transmembrane regions (helical) follow at residues 1-21, 26-46, 77-97, and 108-128; these read MSEL…AWKA, WWFA…ITLF, ILPG…LGWI, and FGYS…SPAF.

The protein belongs to the OpgB family.

The protein resides in the cell inner membrane. It carries out the reaction a phosphatidylglycerol + a membrane-derived-oligosaccharide D-glucose = a 1,2-diacyl-sn-glycerol + a membrane-derived-oligosaccharide 6-(glycerophospho)-D-glucose.. Its pathway is glycan metabolism; osmoregulated periplasmic glucan (OPG) biosynthesis. Its function is as follows. Transfers a phosphoglycerol residue from phosphatidylglycerol to the membrane-bound nascent glucan backbones. This Escherichia coli O139:H28 (strain E24377A / ETEC) protein is Phosphoglycerol transferase I.